Reading from the N-terminus, the 292-residue chain is Glycine--tRNA ligase alpha subunit (292 aa).

The protein belongs to the class-II aminoacyl-tRNA synthetase family. In terms of assembly, tetramer of two alpha and two beta subunits.

The protein resides in the cytoplasm. The catalysed reaction is tRNA(Gly) + glycine + ATP = glycyl-tRNA(Gly) + AMP + diphosphate. This chain is Glycine--tRNA ligase alpha subunit, found in Desulfovibrio desulfuricans (strain ATCC 27774 / DSM 6949 / MB).